Reading from the N-terminus, the 309-residue chain is Probable manganese-dependent inorganic pyrophosphatase (309 aa).

Mn(2+) is bound by residues His9, Asp13, Asp15, Asp75, His97, and Asp149.

It belongs to the PPase class C family. Requires Mn(2+) as cofactor.

Its subcellular location is the cytoplasm. It catalyses the reaction diphosphate + H2O = 2 phosphate + H(+). The protein is Probable manganese-dependent inorganic pyrophosphatase of Exiguobacterium sp. (strain ATCC BAA-1283 / AT1b).